Reading from the N-terminus, the 156-residue chain is Arginine repressor (156 aa).

It belongs to the ArgR family.

The protein localises to the cytoplasm. Its pathway is amino-acid biosynthesis; L-arginine biosynthesis [regulation]. Its function is as follows. Regulates arginine biosynthesis genes. The protein is Arginine repressor of Vibrio vulnificus (strain CMCP6).